The sequence spans 577 residues: General transcription factor IIF subunit 1 (577 aa).

The tract at residues 1–36 (MSSASKSTPSAASGSSTSAAAAAAASVASGSASSSA) is disordered. 4 positions are modified to phosphoserine: S183, S246, S250, and S252. A disordered region spans residues 236–508 (KITDMDEWID…TSLPTSFSGG (273 aa)). Positions 240–256 (MDEWIDSEDESDSEDEE) are enriched in acidic residues. Residues 257–271 (DKKKKEQEDSDDGKA) are compositionally biased toward basic and acidic residues. Positions 272-285 (KGKGKKGADKKKKK) are enriched in basic residues. Residues 289 to 304 (DDEAFEESDDGDEEGR) are compositionally biased toward acidic residues. The segment covering 319–341 (PEAKVDKDMKGVAEEDALRKLLT) has biased composition (basic and acidic residues). T341 is modified (phosphothreonine). Phosphoserine occurs at positions 342, 352, and 355. Positions 362–376 (GEKKKKDKGKDEVSK) are enriched in basic and acidic residues. Positions 392 to 406 (SNGSGDSSTDFSSDS) are enriched in low complexity. Residues 423–437 (VVKDKDKEKEKEKES) are compositionally biased toward basic and acidic residues. Residues 438 to 456 (AASSKVIASSSNANKSRSA) show a composition bias toward low complexity. Phosphoserine occurs at positions 453 and 455. T457 is modified (phosphothreonine). Polar residues-rich tracts occupy residues 471-489 (SLPS…TSTP) and 496-506 (EISTSLPTSFS). Phosphoserine occurs at positions 482 and 484. T488 bears the Phosphothreonine mark.

It belongs to the TFIIF alpha subunit family. In terms of assembly, heterodimer of an alpha and a beta subunit. Post-translationally, phosphorylated on Ser and other residues by TAF1 and casein kinase II-like kinases.

Its subcellular location is the nucleus. In terms of biological role, TFIIF is a general transcription initiation factor that binds to RNA polymerase II and helps to recruit it to the initiation complex in collaboration with TFIIB. It promotes transcription elongation. The polypeptide is General transcription factor IIF subunit 1 (Drosophila melanogaster (Fruit fly)).